The chain runs to 181 residues: Cyclic AMP-dependent transcription factor ATF-3 (181 aa).

The segment at 76–97 is disordered; the sequence is VTKAEVAPEEDERKKRRRERNK. Lysine 78 participates in a covalent cross-link: Glycyl lysine isopeptide (Lys-Gly) (interchain with G-Cter in SUMO2). The bZIP domain maps to 86-149; that stretch reads DERKKRRRER…QHLIYMLNLH (64 aa). The tract at residues 88–110 is basic motif; that stretch reads RKKRRRERNKIAAAKCRNKKKEK. The interval 114 to 142 is leucine-zipper; it reads LQKESEKLESVNAELKAQIEELKNEKQHL. The residue at position 162 (threonine 162) is a Phosphothreonine. Residue lysine 175 forms a Glycyl lysine isopeptide (Lys-Gly) (interchain with G-Cter in SUMO2) linkage.

The protein belongs to the bZIP family. ATF subfamily. Binds DNA as a homodimer or a heterodimer. Interacts with KAT5; promoting KAT5 autoacetylation and KAT5 deubiquitination by USP7.

It localises to the nucleus. Its function is as follows. This protein binds the cAMP response element (CRE) (consensus: 5'-GTGACGT[AC][AG]-3'), a sequence present in many viral and cellular promoters. Represses transcription from promoters with ATF sites. It may repress transcription by stabilizing the binding of inhibitory cofactors at the promoter. This chain is Cyclic AMP-dependent transcription factor ATF-3 (ATF3), found in Bos taurus (Bovine).